Here is a 477-residue protein sequence, read N- to C-terminus: 3-isopropylmalate dehydratase large subunit (477 aa).

Residues Cys-352, Cys-413, and Cys-416 each contribute to the [4Fe-4S] cluster site.

The protein belongs to the aconitase/IPM isomerase family. LeuC type 1 subfamily. Heterodimer of LeuC and LeuD. The cofactor is [4Fe-4S] cluster.

It catalyses the reaction (2R,3S)-3-isopropylmalate = (2S)-2-isopropylmalate. It participates in amino-acid biosynthesis; L-leucine biosynthesis; L-leucine from 3-methyl-2-oxobutanoate: step 2/4. In terms of biological role, catalyzes the isomerization between 2-isopropylmalate and 3-isopropylmalate, via the formation of 2-isopropylmaleate. This chain is 3-isopropylmalate dehydratase large subunit, found in Pseudomonas putida (strain GB-1).